A 311-amino-acid chain; its full sequence is Putative HTH-type transcriptional regulatory protein PTO0557 (311 aa).

The 55-residue stretch at 132–186 (MRRIRELKGYSVGYLSSKLGISRRSISLYESGSSATIDIYLKLEETLGEDLTKDI) folds into the HTH cro/C1-type domain. Positions 143-162 (VGYLSSKLGISRRSISLYES) form a DNA-binding region, H-T-H motif.

This chain is Putative HTH-type transcriptional regulatory protein PTO0557, found in Picrophilus torridus (strain ATCC 700027 / DSM 9790 / JCM 10055 / NBRC 100828 / KAW 2/3).